A 253-amino-acid polypeptide reads, in one-letter code: Triosephosphate isomerase (253 aa).

9–11 lines the substrate pocket; it reads NWK. His95 functions as the Electrophile in the catalytic mechanism. The active-site Proton acceptor is the Glu167. Residues Gly173, Ser213, and 234–235 contribute to the substrate site; that span reads GG. The residue at position 213 (Ser213) is a Phosphoserine.

Belongs to the triosephosphate isomerase family. In terms of assembly, homodimer.

The protein resides in the cytoplasm. The catalysed reaction is D-glyceraldehyde 3-phosphate = dihydroxyacetone phosphate. The protein operates within carbohydrate biosynthesis; gluconeogenesis. It functions in the pathway carbohydrate degradation; glycolysis; D-glyceraldehyde 3-phosphate from glycerone phosphate: step 1/1. Its function is as follows. Involved in the gluconeogenesis. Catalyzes stereospecifically the conversion of dihydroxyacetone phosphate (DHAP) to D-glyceraldehyde-3-phosphate (G3P). The polypeptide is Triosephosphate isomerase (Bacillus subtilis (strain 168)).